Consider the following 351-residue polypeptide: Protein pelota homolog (351 aa).

Belongs to the eukaryotic release factor 1 family. Pelota subfamily. Monomer. A divalent metal cation is required as a cofactor.

Its subcellular location is the cytoplasm. In terms of biological role, may function in recognizing stalled ribosomes, interact with stem-loop structures in stalled mRNA molecules, and effect endonucleolytic cleavage of the mRNA. May play a role in the release non-functional ribosomes and degradation of damaged mRNAs. Has endoribonuclease activity. In Methanosphaera stadtmanae (strain ATCC 43021 / DSM 3091 / JCM 11832 / MCB-3), this protein is Protein pelota homolog.